The following is a 120-amino-acid chain: Ribosome-binding factor A (120 aa).

The protein belongs to the RbfA family. Monomer. Binds 30S ribosomal subunits, but not 50S ribosomal subunits or 70S ribosomes.

The protein localises to the cytoplasm. In terms of biological role, one of several proteins that assist in the late maturation steps of the functional core of the 30S ribosomal subunit. Associates with free 30S ribosomal subunits (but not with 30S subunits that are part of 70S ribosomes or polysomes). Required for efficient processing of 16S rRNA. May interact with the 5'-terminal helix region of 16S rRNA. The sequence is that of Ribosome-binding factor A from Chlamydia felis (strain Fe/C-56) (Chlamydophila felis).